An 874-amino-acid polypeptide reads, in one-letter code: Alanine--tRNA ligase (874 aa).

Residues His-563, His-567, Cys-665, and His-669 each contribute to the Zn(2+) site.

It belongs to the class-II aminoacyl-tRNA synthetase family. Zn(2+) serves as cofactor.

The protein localises to the cytoplasm. The enzyme catalyses tRNA(Ala) + L-alanine + ATP = L-alanyl-tRNA(Ala) + AMP + diphosphate. Catalyzes the attachment of alanine to tRNA(Ala) in a two-step reaction: alanine is first activated by ATP to form Ala-AMP and then transferred to the acceptor end of tRNA(Ala). Also edits incorrectly charged Ser-tRNA(Ala) and Gly-tRNA(Ala) via its editing domain. In Haemophilus influenzae (strain ATCC 51907 / DSM 11121 / KW20 / Rd), this protein is Alanine--tRNA ligase.